A 140-amino-acid chain; its full sequence is Seminal plasma protein A3 (140 aa).

Positions 1–25 (MALRLGLFLIWAGVSMFLQLDPVNG) are cleaved as a signal peptide. 2 consecutive Fibronectin type-II domains span residues 49 to 93 (TKDN…YCTK) and 94 to 140 (NDYA…WKYC). Intrachain disulfides connect cysteine 54–cysteine 78, cysteine 68–cysteine 91, cysteine 99–cysteine 125, and cysteine 113–cysteine 140.

It belongs to the seminal plasma protein family.

Its subcellular location is the secreted. The BSP-A proteins from seminal plasma exhibit both simulatory and inhibitory actions on the release of pituitary gonadotropins. The exact function of these proteins is not known. This is Seminal plasma protein A3 from Bos taurus (Bovine).